The primary structure comprises 285 residues: 4,4'-diapophytoene synthase (285 aa).

(2E,6E)-farnesyl diphosphate is bound by residues 18-21 (YSKS), Tyr-41, and Arg-45. Mg(2+) contacts are provided by Asp-48 and Asp-52. Residue Gln-163 coordinates (2E,6E)-farnesyl diphosphate. Mg(2+) is bound at residue Asn-166. Arg-169 is a binding site for (2E,6E)-farnesyl diphosphate. Position 170 (Asp-170) interacts with Mg(2+). (2E,6E)-farnesyl diphosphate is bound at residue Tyr-247.

It belongs to the phytoene/squalene synthase family. CrtM subfamily. The cofactor is Mg(2+).

The enzyme catalyses 2 (2E,6E)-farnesyl diphosphate = 15-cis-4,4'-diapophytoene + 2 diphosphate. It functions in the pathway carotenoid biosynthesis; staphyloxanthin biosynthesis; staphyloxanthin from farnesyl diphosphate: step 1/5. In terms of biological role, involved in the biosynthesis of the yellow-orange carotenoid staphyloxanthin, which plays a role in the virulence via its protective function against oxidative stress. Catalyzes the head-to-head condensation of two molecules of farnesyl diphosphate (FPP) into the colorless C(30) carotenoid 4,4'-diapophytoene (dehydrosqualene). In Staphylococcus haemolyticus (strain JCSC1435), this protein is 4,4'-diapophytoene synthase (crtM).